Reading from the N-terminus, the 168-residue chain is Alpha-N-acetylgalactosamine-specific lectin (168 aa).

The signal sequence occupies residues 1-18; that stretch reads MAFFRALCFVLLVGFAAA. A C-type lectin domain is found at 38–163; that stretch reads YNGNCYRYFG…CSRAFAYVCK (126 aa). Intrachain disulfides connect cysteine 59/cysteine 162 and cysteine 136/cysteine 154.

In terms of assembly, monomer, homodimer and homooligomer.

Functionally, alpha-N-acetylgalactosamine-specific lectin. The oligomeric form has Ca(2+)-dependent hemagglutination activity towards sheep erythrocytes. Its hemagglutination activity is inhibited by various monosaccharides, oligosaccharides and glycopeptides, including inhibition by GalNAc, blood group A trisaccharide, Tn antigen, mucin and asialomucin. This chain is Alpha-N-acetylgalactosamine-specific lectin, found in Patiria pectinifera (Starfish).